The following is a 253-amino-acid chain: uncharacterized protein (253 aa).

A signal peptide spans 1–19; the sequence is MRYLKRITIYISLLILVSG. Cys-20 is lipidated: N-palmitoyl cysteine. Cys-20 carries S-diacylglycerol cysteine lipidation.

The protein belongs to the staphylococcal tandem lipoprotein family.

Its subcellular location is the cell membrane. This is an uncharacterized protein from Staphylococcus epidermidis (strain ATCC 12228 / FDA PCI 1200).